The sequence spans 509 residues: Maturase K (509 aa).

This sequence belongs to the intron maturase 2 family. MatK subfamily.

The protein resides in the plastid. Its subcellular location is the chloroplast. Its function is as follows. Usually encoded in the trnK tRNA gene intron. Probably assists in splicing its own and other chloroplast group II introns. This is Maturase K from Drimys granadensis.